The primary structure comprises 457 residues: Argininosuccinate lyase (457 aa).

The protein belongs to the lyase 1 family. Argininosuccinate lyase subfamily.

Its subcellular location is the cytoplasm. It catalyses the reaction 2-(N(omega)-L-arginino)succinate = fumarate + L-arginine. It functions in the pathway amino-acid biosynthesis; L-arginine biosynthesis; L-arginine from L-ornithine and carbamoyl phosphate: step 3/3. The polypeptide is Argininosuccinate lyase (Escherichia coli O157:H7 (strain EC4115 / EHEC)).